Reading from the N-terminus, the 238-residue chain is Ribonuclease Rh (238 aa).

The first 16 residues, 1–16 (MKAVLALATLIGSTLA), serve as a signal peptide directing secretion. 5 cysteine pairs are disulfide-bonded: cysteine 19–cysteine 36, cysteine 26–cysteine 69, cysteine 35–cysteine 136, cysteine 79–cysteine 128, and cysteine 198–cysteine 229. Active-site residues include histidine 62, glutamate 121, and histidine 125.

It belongs to the RNase T2 family.

The catalysed reaction is a ribonucleotidyl-ribonucleotide-RNA + H2O = a 3'-end 3'-phospho-ribonucleotide-RNA + a 5'-end dephospho-ribonucleoside-RNA + H(+). Functionally, this is a base non-specific ribonuclease. The chain is Ribonuclease Rh from Rhizopus niveus.